The sequence spans 473 residues: MSAINDPIAAASSGPSEPVQEVQVDVTKLTALSPEVISKQATINIGTIGHVAHGKSSTVRAISGVQTVRFKNELERNITIKLGYANAKIYKCQNPDCPPPSCFKSYPSSKEAHPKCERPGCDGRMDLQRHVSFVDCPGHDILMATMLTGAAVMNGALLLIAGNESCPQPQTGEHLAALEIIGVDPKNIVILQNKMDLVRESEAMEHCESIKKFVEGTTARLAPIIPVSAQLKFNIDAVVAAICNIAPPNYDFSADPRMVVIRSFDVNKPGAGVDELKGGVAGGSILQGVFKVGQEVEIRPGLITRDANGVCTCRPLRSRIVSLHAEQNHLQFAVPGGLIGVGTLVDPALCRADRLLGMVMSSVGKGPSIYVEIRAEVFLLRRLLGVKTDDSKKAKVGKLVVGETLFVNIGASQTGGRITAVKGGDVSIALTTPACCEKGEKIALSRRIDKHWRLIGWGKVRSGGTLCEVVDPE.

Residues Q40–Y250 enclose the tr-type G domain. The G1 stretch occupies residues G49 to S56. A52–S57 provides a ligand contact to GTP. A G2 region spans residues N77–K81. The G3 stretch occupies residues D135 to G138. Residues N193–D196 and S228–Q230 contribute to the GTP site. A G4 region spans residues N193–D196. The interval S228 to Q230 is G5. Residues G458–V470 are interacts with CDC123.

This sequence belongs to the TRAFAC class translation factor GTPase superfamily. Classic translation factor GTPase family. EIF2G subfamily. In terms of assembly, eukaryotic translation initiation factor 2 eIF2 is a heterotrimeric complex composed of an alpha, a beta and a gamma subunit. The factors eIF-1, eIF-2, eIF-3, TIF5/eIF-5 and methionyl-tRNAi form a multifactor complex (MFC) that may bind to the 40S ribosome.

It localises to the cytoplasm. The protein localises to the cytosol. The enzyme catalyses GTP + H2O = GDP + phosphate + H(+). In terms of biological role, as a subunit of eukaryotic initiation factor 2 eIF2, involved in the early steps of protein synthesis. In the presence of GTP, eIF-2 forms a ternary complex with initiator tRNA Met-tRNAi and then recruits the 40S ribosomal complex and initiation factors eIF-1, eIF-1A and eIF-3 to form the 43S pre-initiation complex (43S PIC), a step that determines the rate of protein translation. The 43S PIC binds to mRNA and scans downstream to the initiation codon, where it forms a 48S initiation complex by codon-anticodon base pairing. This leads to the displacement of eIF-1 to allow GTPase-activating protein (GAP) eIF-5-mediated hydrolysis of eIF2-bound GTP. Hydrolysis of GTP and release of Pi, which makes GTP hydrolysis irreversible, causes the release of the eIF-2-GDP binary complex from the 40S subunit, an event that is essential for the subsequent joining of the 60S ribosomal subunit to form an elongation-competent 80S ribosome. In order for eIF-2 to recycle and catalyze another round of initiation, the GDP bound to eIF-2 must be exchanged with GTP by way of a reaction catalyzed by GDP-GTP exchange factor (GEF) eIF-2B. This Cryptococcus neoformans var. grubii serotype A (strain H99 / ATCC 208821 / CBS 10515 / FGSC 9487) (Filobasidiella neoformans var. grubii) protein is Eukaryotic translation initiation factor 2 subunit gamma.